A 559-amino-acid chain; its full sequence is Formate--tetrahydrofolate ligase (559 aa).

An ATP-binding site is contributed by 67 to 74; it reads TPAGEGKS.

The protein belongs to the formate--tetrahydrofolate ligase family.

The enzyme catalyses (6S)-5,6,7,8-tetrahydrofolate + formate + ATP = (6R)-10-formyltetrahydrofolate + ADP + phosphate. Its pathway is one-carbon metabolism; tetrahydrofolate interconversion. This is Formate--tetrahydrofolate ligase from Lactobacillus delbrueckii subsp. bulgaricus (strain ATCC 11842 / DSM 20081 / BCRC 10696 / JCM 1002 / NBRC 13953 / NCIMB 11778 / NCTC 12712 / WDCM 00102 / Lb 14).